The primary structure comprises 83 residues: Exodeoxyribonuclease 7 small subunit (83 aa).

The protein belongs to the XseB family. Heterooligomer composed of large and small subunits.

The protein localises to the cytoplasm. It catalyses the reaction Exonucleolytic cleavage in either 5'- to 3'- or 3'- to 5'-direction to yield nucleoside 5'-phosphates.. Its function is as follows. Bidirectionally degrades single-stranded DNA into large acid-insoluble oligonucleotides, which are then degraded further into small acid-soluble oligonucleotides. This Rhodopseudomonas palustris (strain HaA2) protein is Exodeoxyribonuclease 7 small subunit.